Reading from the N-terminus, the 83-residue chain is Cytochrome b559 subunit alpha (83 aa).

Residues 21 to 35 (VIHSITIPSLFIAGW) traverse the membrane as a helical segment. A heme-binding site is contributed by H23.

The protein belongs to the PsbE/PsbF family. As to quaternary structure, heterodimer of an alpha subunit and a beta subunit. PSII is composed of 1 copy each of membrane proteins PsbA, PsbB, PsbC, PsbD, PsbE, PsbF, PsbH, PsbI, PsbJ, PsbK, PsbL, PsbM, PsbT, PsbX, PsbY, PsbZ, Psb30/Ycf12, at least 3 peripheral proteins of the oxygen-evolving complex and a large number of cofactors. It forms dimeric complexes. It depends on heme b as a cofactor.

It localises to the plastid. It is found in the chloroplast thylakoid membrane. Functionally, this b-type cytochrome is tightly associated with the reaction center of photosystem II (PSII). PSII is a light-driven water:plastoquinone oxidoreductase that uses light energy to abstract electrons from H(2)O, generating O(2) and a proton gradient subsequently used for ATP formation. It consists of a core antenna complex that captures photons, and an electron transfer chain that converts photonic excitation into a charge separation. The protein is Cytochrome b559 subunit alpha of Chlorella vulgaris (Green alga).